The chain runs to 337 residues: Leucine-rich repeat-containing protein 39 (337 aa).

9 LRR repeats span residues 84 to 105, 107 to 128, 130 to 152, 153 to 176, 177 to 198, 200 to 221, 223 to 244, 246 to 267, and 269 to 290; these read QLQEWQLHRTGLLKIPEFIGRF, HLIVLDLSRNTISEIPRGIGLL, RLQELILSYNKIKTVPKELSNCT, SLEKLELAVNRDISDLPPELSKLL, KLTHLDLSMNQFTTIPHAVLDM, ALEWLDMGSNSLQQLPDSLDRM, SLHTLWLQRNEITCLPETIKNM, NLGTLVLSNNKLQDIPGCMEEM, and NLRFVNFRDNPLRLEVTLPPSD.

As to quaternary structure, interacts with MYH7 (via C-terminus). As to expression, expressed in heart and skeletal muscle.

It is found in the cytoplasm. The protein resides in the myofibril. Its subcellular location is the sarcomere. The protein localises to the m line. Component of the sarcomeric M-band which plays a role in myocyte response to biomechanical stress. May regulate expression of other M-band proteins via an SRF-dependent pathway. Important for normal contractile function in heart. The sequence is that of Leucine-rich repeat-containing protein 39 from Mus musculus (Mouse).